The primary structure comprises 850 residues: MADFHISKVHELMMNQKNIRNISVIAHVDHGKSTLTDCLVIKAKIVSKDSGGGRYMDSREDEQQRGITIKSSAISLHFQVQKDVLEAYTKEGDTNGTEFLINLIDSPGHVDFSSEVTAALRVTDGALVVVDCVDGICVQTETVLGQAMNERIIPTLVLNKLDRAILELEYPQEKLGEVLRRRVEGFNAKLSTLGYNFKVESLLPEKNEISFCSGLQGWGFTLRQFARFYLEKFNMNGFEGERKLTNFLWSHKVSCTSDDPFDASIKHIAKPNPARSPFVVYVLNPIYKVKELCNNGKVEEIKEYLKFYKVDFKGVVLTGSGKSLFKEVMKTWLPAADCILEQIALKLPSPLQSQKLRYDYLYEGPADDEVANAIKMCDGSDEAPVSMYVSKMIPSNDNRFIAFGRVFSGKIFPGMKIRVQEPGYSPGSEELSNTSLIHNKSVLRTVVMMGRGYKDVPNCPAGNIIGIIGIDDCLKKTGTITNREAAHNIRSMKFSVSPVVKVAVSAKRPEDLGKLQEGLNKLAQSDPLCVVERNDKGQNTIACAGSLHLEICLKDLQDQYAKVPIIADDPLVTYFEGISCAVSDSKMTKSANKHNRIYMTVEPLDQNIVDNLKDVKSDQAKTMATNFREKLDIRDDWIRKIWCYAPEVNPLNLLVDGTKGISIINEIKEHVNTGFRAAVNDGPLIGEVMRGLKFELKDAVLHADAIHRGINQLLQPVKNLCKGLLLAAGPILYEPIYEVEITTPNDYSGAVTTILLSKRGTAEDFKTLPGNDTTMITGTLPVKESFTFNEDLKSGSRGKAGASMRFSHYSILPGNLEDPNSLMFKTVEAVRKLKKMNPAPPTPDSFFDRL.

A tr-type G domain is found at 17 to 351 (KNIRNISVIA…QIALKLPSPL (335 aa)). Residues 26 to 33 (AHVDHGKS), 159 to 162 (NKLD), and 213 to 215 (SGL) each bind GTP. His707 is modified (diphthamide).

The protein belongs to the TRAFAC class translation factor GTPase superfamily. Classic translation factor GTPase family. EF-G/EF-2 subfamily.

The protein localises to the cytoplasm. It carries out the reaction GTP + H2O = GDP + phosphate + H(+). It participates in protein biosynthesis; polypeptide chain elongation. Catalyzes the GTP-dependent ribosomal translocation step during translation elongation. During this step, the ribosome changes from the pre-translocational (PRE) to the post-translocational (POST) state as the newly formed A-site-bound peptidyl-tRNA and P-site-bound deacylated tRNA move to the P and E sites, respectively. Catalyzes the coordinated movement of the two tRNA molecules, the mRNA and conformational changes in the ribosome. This is Elongation factor 2 (EFT1) from Encephalitozoon cuniculi (strain GB-M1) (Microsporidian parasite).